A 496-amino-acid chain; its full sequence is Probable G-protein coupled receptor Mth-like 5 (496 aa).

Topologically, residues 1-219 are extracellular; the sequence is MLVKTLGAHF…SNFLLRKILN (219 aa). N-linked (GlcNAc...) asparagine glycosylation occurs at Asn82. The chain crosses the membrane as a helical span at residues 220 to 240; it reads PIFHGISLVILLVIAIIYFIL. The Cytoplasmic portion of the chain corresponds to 241–246; the sequence is PTLRDL. Residues 247–267 form a helical membrane-spanning segment; it reads VGNIVTTIAMCLMVSQAADLV. At 268–276 the chain is on the extracellular side; sequence RIFTELTSH. The helical transmembrane segment at 277–297 threads the bilayer; it reads VSFIVADIILCFSLLAAFFWL. The Cytoplasmic segment spans residues 298-327; that stretch reads NSFGFYIWKTFRSRNVFLRVTDGRKYCYYS. The helical transmembrane segment at 328–348 threads the bilayer; sequence AYAWGCTATMAALAVFAHFFL. Residues 349–366 are Extracellular-facing; the sequence is DAESYKQEHMVGEQETIG. A helical membrane pass occupies residues 367 to 387; it reads WLGICIFFAPIACTILVNIFF. Over 388-411 the chain is Cytoplasmic; sequence YVTTRKLINRRTVYGRIAHKLKAN. A helical transmembrane segment spans residues 412-432; sequence FIMFSLMLLVMSIAWLFLIMS. The Extracellular segment spans residues 433-438; sequence WLQMEG. A helical membrane pass occupies residues 439-459; it reads LLYAHIVVNALQTPLLLYICV. The Cytoplasmic portion of the chain corresponds to 460–496; it reads LRQRHVTFLLKKTCCYNEPPSANDWGDELHYMNGNDY.

It belongs to the G-protein coupled receptor 2 family. Mth subfamily.

The protein resides in the cell membrane. The sequence is that of Probable G-protein coupled receptor Mth-like 5 (mthl5) from Drosophila melanogaster (Fruit fly).